The sequence spans 186 residues: Ribosome-recycling factor (186 aa).

The protein belongs to the RRF family.

It localises to the cytoplasm. In terms of biological role, responsible for the release of ribosomes from messenger RNA at the termination of protein biosynthesis. May increase the efficiency of translation by recycling ribosomes from one round of translation to another. The protein is Ribosome-recycling factor of Cytophaga hutchinsonii (strain ATCC 33406 / DSM 1761 / CIP 103989 / NBRC 15051 / NCIMB 9469 / D465).